A 101-amino-acid chain; its full sequence is MSSSQLEQAITDLINLFHKYSGSDDTIEKEDLLRLMKDNFPNFLGACEKRGRDYLSNIFEKQDKNKDRKIDFSEFLSLLADIATDYHNHSHGAQLCSGGNQ.

Serine 2 carries the N-acetylserine modification. 2 EF-hand domains span residues 8–42 (QAITDLINLFHKYSGSDDTIEKEDLLRLMKDNFPN) and 50–85 (RGRDYLSNIFEKQDKNKDRKIDFSEFLSLLADIATD). 2 residues coordinate Zn(2+): histidine 18 and aspartate 25. 5 residues coordinate Ca(2+): aspartate 63, asparagine 65, aspartate 67, lysine 69, and glutamate 74. Zn(2+) is bound by residues histidine 87 and histidine 91.

This sequence belongs to the S-100 family. In terms of assembly, interacts with RANBP9.

The protein localises to the cytoplasm. It localises to the secreted. The sequence is that of Protein S100-A7 (S100A7) from Bos taurus (Bovine).